We begin with the raw amino-acid sequence, 440 residues long: Thymidine phosphorylase (440 aa).

Belongs to the thymidine/pyrimidine-nucleoside phosphorylase family. Homodimer.

The enzyme catalyses thymidine + phosphate = 2-deoxy-alpha-D-ribose 1-phosphate + thymine. It participates in pyrimidine metabolism; dTMP biosynthesis via salvage pathway; dTMP from thymine: step 1/2. The enzymes which catalyze the reversible phosphorolysis of pyrimidine nucleosides are involved in the degradation of these compounds and in their utilization as carbon and energy sources, or in the rescue of pyrimidine bases for nucleotide synthesis. The polypeptide is Thymidine phosphorylase (Salmonella schwarzengrund (strain CVM19633)).